We begin with the raw amino-acid sequence, 462 residues long: Alkaline ceramidase TOD1 (462 aa).

Residues 1–18 (MGKFITTTLSPPLYARSK) lie on the Cytoplasmic side of the membrane. Residues 19–39 (LLCFSLLYLFSTIFLFLYVSL) traverse the membrane as a helical segment. Over 40 to 462 (SRNQCIFRYS…CKNYLTDMWG (423 aa)) the chain is Lumenal. N121, N132, and N449 each carry an N-linked (GlcNAc...) asparagine glycan.

This sequence belongs to the alkaline ceramidase family. In terms of tissue distribution, preferentially expressed in pollen grains, pollen tubes and silique guard cells, but barely detectable in roots, stems and leaves.

The protein resides in the golgi apparatus membrane. It carries out the reaction an N-acylsphing-4-enine + H2O = sphing-4-enine + a fatty acid. It functions in the pathway lipid metabolism. Functionally, endoplasmic reticulum ceramidase that catalyzes the hydrolysis of ceramides into sphingosine and free fatty acids at alkaline pH (e.g. pH 9.5). Inactive on phytoceramide. Involved in the regulation of turgor pressure in guard cells and pollen tubes. The polypeptide is Alkaline ceramidase TOD1 (Arabidopsis thaliana (Mouse-ear cress)).